The sequence spans 117 residues: Large ribosomal subunit protein eL34 (117 aa).

Ser-12 carries the post-translational modification Phosphoserine. An N6-acetyllysine mark is found at Lys-36 and Lys-43. Lys-108 participates in a covalent cross-link: Glycyl lysine isopeptide (Lys-Gly) (interchain with G-Cter in SUMO2).

This sequence belongs to the eukaryotic ribosomal protein eL34 family. In terms of assembly, component of the large ribosomal subunit.

It localises to the cytoplasm. It is found in the cytosol. The protein localises to the endoplasmic reticulum. Its function is as follows. Component of the large ribosomal subunit. The ribosome is a large ribonucleoprotein complex responsible for the synthesis of proteins in the cell. In Mus musculus (Mouse), this protein is Large ribosomal subunit protein eL34 (Rpl34).